The primary structure comprises 142 residues: Tol-Pal system protein TolR (142 aa).

Over 1-17 the chain is Cytoplasmic; that stretch reads MARARGRGRRDLKSEIN. Residues 18-38 traverse the membrane as a helical segment; the sequence is IVPLLDVLLVLLLIFMATAPI. Over 39 to 142 the chain is Periplasmic; it reads ITQSVEVDLP…KSVGLMTQPI (104 aa).

This sequence belongs to the ExbD/TolR family. The Tol-Pal system is composed of five core proteins: the inner membrane proteins TolA, TolQ and TolR, the periplasmic protein TolB and the outer membrane protein Pal. They form a network linking the inner and outer membranes and the peptidoglycan layer.

Its subcellular location is the cell inner membrane. Functionally, part of the Tol-Pal system, which plays a role in outer membrane invagination during cell division and is important for maintaining outer membrane integrity. Required, with TolQ, for the proton motive force-dependent activation of TolA and for TolA-Pal interaction. The chain is Tol-Pal system protein TolR from Escherichia coli O157:H7.